The primary structure comprises 180 residues: Large ribosomal subunit protein uL5 (180 aa).

Belongs to the universal ribosomal protein uL5 family. As to quaternary structure, part of the 50S ribosomal subunit; part of the 5S rRNA/L5/L18/L25 subcomplex. Contacts the 5S rRNA and the P site tRNA. Forms a bridge to the 30S subunit in the 70S ribosome.

This is one of the proteins that bind and probably mediate the attachment of the 5S RNA into the large ribosomal subunit, where it forms part of the central protuberance. In the 70S ribosome it contacts protein S13 of the 30S subunit (bridge B1b), connecting the 2 subunits; this bridge is implicated in subunit movement. Contacts the P site tRNA; the 5S rRNA and some of its associated proteins might help stabilize positioning of ribosome-bound tRNAs. This Solibacter usitatus (strain Ellin6076) protein is Large ribosomal subunit protein uL5.